The sequence spans 47 residues: Delta-stichotoxin-Hcr3a (47 aa).

The residue at position 3 (P3) is a Hydroxyproline. 3 disulfides stabilise this stretch: C4–C44, C6–C34, and C27–C45.

Belongs to the sea anemone sodium channel inhibitory toxin family. Type I subfamily.

Its subcellular location is the secreted. It is found in the nematocyst. In terms of biological role, inhibits voltage-gated sodium channels (Nav). The protein is Delta-stichotoxin-Hcr3a of Radianthus crispa (Leathery sea anemone).